Reading from the N-terminus, the 227-residue chain is tRNA (guanine-N(1)-)-methyltransferase (227 aa).

Residues glycine 111 and 135-140 (LGDYVL) contribute to the S-adenosyl-L-methionine site.

The protein belongs to the RNA methyltransferase TrmD family. As to quaternary structure, homodimer.

Its subcellular location is the cytoplasm. The enzyme catalyses guanosine(37) in tRNA + S-adenosyl-L-methionine = N(1)-methylguanosine(37) in tRNA + S-adenosyl-L-homocysteine + H(+). Specifically methylates guanosine-37 in various tRNAs. This chain is tRNA (guanine-N(1)-)-methyltransferase, found in Leifsonia xyli subsp. xyli (strain CTCB07).